A 212-amino-acid polypeptide reads, in one-letter code: Ribonuclease HII (212 aa).

The region spanning 28 to 212 is the RNase H type-2 domain; that stretch reads SIIAGVDEVG…KSFAPIRQVV (185 aa). 3 residues coordinate a divalent metal cation: aspartate 34, glutamate 35, and aspartate 127.

The protein belongs to the RNase HII family. The cofactor is Mn(2+). Mg(2+) is required as a cofactor.

It is found in the cytoplasm. It carries out the reaction Endonucleolytic cleavage to 5'-phosphomonoester.. Its function is as follows. Endonuclease that specifically degrades the RNA of RNA-DNA hybrids. The chain is Ribonuclease HII from Chlamydia caviae (strain ATCC VR-813 / DSM 19441 / 03DC25 / GPIC) (Chlamydophila caviae).